Consider the following 535-residue polypeptide: E3 ubiquitin-protein ligase rnf168 (535 aa).

Residues 16-55 form an RING-type zinc finger; that stretch reads CPICQEILLEPVTLPCKHTLCNPCFQMTVEKASLCCPFCR. Residues 112–130 carry the LR motif 1 motif; the sequence is LCKPGEIRQEYEAEVSKIE. The short motif at 145–153 is the UMI motif element; sequence EDYIQKLLA. 2 consecutive short sequence motifs (MIU motif) follow at residues 170–193 and 406–429; these read IEEQLKRDEELARLLSGDMDLSNA and RRKQEEHDRLFALQLQRELDKELK. The segment covering 429-443 has biased composition (basic and acidic residues); the sequence is KQVNRGKGSPDEYQL. Residues 429–535 form a disordered region; the sequence is KQVNRGKGSP…LDLFQRSAGK (107 aa). The LR motif 2 motif lies at 433-444; it reads RGKGSPDEYQLR. Polar residues-rich tracts occupy residues 462-478 and 492-507; these read NEQTPVQDKGGNTQSGY and ITSSQVRQSRAVTNTE.

Belongs to the RNF168 family. In terms of assembly, monomer.

Its subcellular location is the nucleus. It carries out the reaction S-ubiquitinyl-[E2 ubiquitin-conjugating enzyme]-L-cysteine + [acceptor protein]-L-lysine = [E2 ubiquitin-conjugating enzyme]-L-cysteine + N(6)-ubiquitinyl-[acceptor protein]-L-lysine.. Its pathway is protein modification; protein ubiquitination. E3 ubiquitin-protein ligase required for accumulation of repair proteins to sites of DNA damage. Acts with ube2n/ubc13 to amplify the rnf8-dependent histone ubiquitination. Recruited to sites of DNA damage at double-strand breaks (DSBs) by binding to ubiquitinated histone H2A and ubiquitinates histone H2A and H2AX, leading to amplify the rnf8-dependent H2A ubiquitination and promoting the formation of 'Lys-63'-linked ubiquitin conjugates. This leads to concentrate ubiquitinated histones H2A and H2AX at DNA lesions to the threshold required for recruitment of tp53bp1 and brca1. Catalyzes monoubiquitination of 'Lys-13' and 'Lys-15' of nucleosomal histone H2A (H2AK13Ub and H2AK15Ub, respectively). This is E3 ubiquitin-protein ligase rnf168 from Xenopus tropicalis (Western clawed frog).